A 453-amino-acid chain; its full sequence is MASSLPWLCIILWLENALGKLEVEGNFYSENVSRILDNLLEGYDNRLRPGFGGAVTEVKTDIYVTSFGPVSDVEMEYTMDVFFRQTWTDERLKFGGPTEILSLNNLMVSKIWTPDTFFRNGKKSIAHNMTTPNKLFRIMQNGTILYTMRLTINADCPMRLVNFPMDGHACPLKFGSYAYPKSEIIYTWKKGPLYSVEVPEESSSLLQYDLIGQTVSSETIKSNTGEYVIMTVYFHLQRKMGYFMIQIYTPCIMTVILSQVSFWINKESVPARTVFGITTVLTMTTLSISARHSLPKVSYATAMDWFIAVCFAFVFSALIEFAAVNYFTNLQTQKAKRKAQFAAPPTVTISKATEPLEAEIVLHPDSKYHLKKRITSLSLPIVSSSEANKVLTRAPILQSTPVTPPPLSPAFGGTSKIDQYSRILFPVAFAGFNLVYWVVYLSKDTMEVSSSVE.

The signal sequence occupies residues methionine 1–glycine 19. The Extracellular portion of the chain corresponds to lysine 20 to phenylalanine 243. N-linked (GlcNAc...) asparagine glycosylation is present at asparagine 31. Arginine 84 is a binding site for 4-aminobutanoate. 2 N-linked (GlcNAc...) asparagine glycosylation sites follow: asparagine 128 and asparagine 141. Threonine 147 lines the 4-aminobutanoate pocket. Cysteine 156 and cysteine 170 are oxidised to a cystine. A helical membrane pass occupies residues methionine 244–isoleucine 264. Topologically, residues asparagine 265–proline 270 are cytoplasmic. A helical membrane pass occupies residues alanine 271 to alanine 290. Residues arginine 291–aspartate 304 lie on the Extracellular side of the membrane. The helical transmembrane segment at tryptophan 305–asparagine 325 threads the bilayer. Residues tyrosine 326–arginine 422 are Cytoplasmic-facing. Threonine 403 is subject to Phosphothreonine. Residues isoleucine 423–lysine 443 traverse the membrane as a helical segment. Topologically, residues aspartate 444 to glutamate 453 are extracellular.

The protein belongs to the ligand-gated ion channel (TC 1.A.9) family. Gamma-aminobutyric acid receptor (TC 1.A.9.5) subfamily. GABRA6 sub-subfamily. In terms of assembly, heteropentamer, formed by a combination of alpha (GABRA1-6), beta (GABRB1-3), gamma (GABRG1-3), delta (GABRD), epsilon (GABRE), rho (GABRR1-3), pi (GABRP) and theta (GABRQ) chains, each subunit exhibiting distinct physiological and pharmacological properties. Binds UBQLN1. In terms of tissue distribution, expressed in brain, in cerebellar granule cells.

The protein localises to the postsynaptic cell membrane. It localises to the cell membrane. It carries out the reaction chloride(in) = chloride(out). Functionally, alpha subunit of the heteropentameric ligand-gated chloride channel gated by gamma-aminobutyric acid (GABA), a major inhibitory neurotransmitter in the brain. GABA-gated chloride channels, also named GABA(A) receptors (GABAAR), consist of five subunits arranged around a central pore and contain GABA active binding site(s) located at the alpha and beta subunit interface(s). When activated by GABA, GABAARs selectively allow the flow of chloride anions across the cell membrane down their electrochemical gradient. Alpha-6/GABRA6 subunits are found at both synaptic and extrasynaptic sites. Chloride influx into the postsynaptic neuron following GABAAR opening decreases the neuron ability to generate a new action potential, thereby reducing nerve transmission. Extrasynaptic alpha-6-containing receptors contribute to the tonic GABAergic inhibition. Alpha-6 subunits are also present on glutamatergic synapses. The sequence is that of Gamma-aminobutyric acid receptor subunit alpha-6 from Homo sapiens (Human).